Here is a 173-residue protein sequence, read N- to C-terminus: Alpha-crystallin A chain (173 aa).

Met-1 carries the N-acetylmethionine modification. Positions 1-63 are required for complex formation with BFSP1 and BFSP2; sequence MDIAIQHPWF…RTVLDSGVSE (63 aa). The residue at position 6 (Gln-6) is a Deamidated glutamine; partial. Ser-45 is modified (phosphoserine). The residue at position 50 (Gln-50) is a Deamidated glutamine; partial. The region spanning 52-162 is the sHSP domain; sequence LFRTVLDSGV…GHSERAIPVS (111 aa). The residue at position 70 (Lys-70) is an N6-acetyllysine. His-79 is a Zn(2+) binding site. The residue at position 90 (Gln-90) is a Deamidated glutamine; partial. N6-acetyllysine is present on Lys-99. His-100 serves as a coordination point for Zn(2+). Residue Asn-101 is modified to Deamidated asparagine; partial. Glu-102 and His-107 together coordinate Zn(2+). Position 122 is a phosphoserine (Ser-122). Asn-123 is subject to Deamidated asparagine; partial. The tract at residues 144–173 is disordered; that stretch reads PKVPSGVDAGHSERAIPVSREEKPSSAPTS. The segment covering 153 to 167 has biased composition (basic and acidic residues); the sequence is GHSERAIPVSREEKP. His-154 is a binding site for Zn(2+). The O-linked (GlcNAc) serine glycan is linked to Ser-162.

It belongs to the small heat shock protein (HSP20) family. Heteromer composed of three CRYAA and one CRYAB subunits. Inter-subunit bridging via zinc ions enhances stability, which is crucial as there is no protein turn over in the lens. Can also form homodimers and homotetramers (dimers of dimers) which serve as the building blocks of homooligomers. Within homooligomers, the zinc-binding motif is created from residues of 3 different molecules. His-100 and Glu-102 from one molecule are ligands of the zinc ion, and His-107 and His-154 residues from additional molecules complete the site with tetrahedral coordination geometry. Part of a complex required for lens intermediate filament formation composed of BFSP1, BFSP2 and CRYAA. Post-translationally, acetylation at Lys-70 may increase chaperone activity. In terms of processing, undergoes age-dependent proteolytical cleavage at the C-terminus.

It is found in the cytoplasm. The protein localises to the nucleus. In terms of biological role, contributes to the transparency and refractive index of the lens. Acts as a chaperone, preventing aggregation of various proteins under a wide range of stress conditions. Required for the correct formation of lens intermediate filaments as part of a complex composed of BFSP1, BFSP2 and CRYAA. The polypeptide is Alpha-crystallin A chain (CRYAA) (Sus scrofa (Pig)).